A 175-amino-acid polypeptide reads, in one-letter code: Viral interleukin-10 homolog (175 aa).

The first 19 residues, methionine 1–alanine 19, serve as a signal peptide directing secretion. Disulfide bonds link cysteine 37–cysteine 127 and cysteine 81–cysteine 132. A glycan (N-linked (GlcNAc...) asparagine; by host) is linked at asparagine 151.

Belongs to the IL-10 family. As to quaternary structure, homodimer; disulfide-linked.

It is found in the secreted. In terms of biological role, functional viral IL-10 homolog. Can bind to the human IL-10 receptor and compete with human IL-10 for binding sites. Requires both subunits of the human IL-10 receptor complex to induce signal transduction events and biological activities. IL-10 signaling pathway has several immunosuppressive activities that are exploited by the virus. Inhibits TLR-induced type I interferon production in host plasmacytoid dendritic cells. This is Viral interleukin-10 homolog (UL111A) from Human cytomegalovirus (strain AD169) (HHV-5).